A 274-amino-acid polypeptide reads, in one-letter code: Bis(5'-nucleosyl)-tetraphosphatase, symmetrical (274 aa).

The protein belongs to the Ap4A hydrolase family.

It catalyses the reaction P(1),P(4)-bis(5'-adenosyl) tetraphosphate + H2O = 2 ADP + 2 H(+). Its function is as follows. Hydrolyzes diadenosine 5',5'''-P1,P4-tetraphosphate to yield ADP. This chain is Bis(5'-nucleosyl)-tetraphosphatase, symmetrical (apaH), found in Buchnera aphidicola subsp. Acyrthosiphon pisum (strain APS) (Acyrthosiphon pisum symbiotic bacterium).